A 396-amino-acid chain; its full sequence is Acetate kinase (396 aa).

Asn8 serves as a coordination point for Mg(2+). Lys15 is a binding site for ATP. Arg89 serves as a coordination point for substrate. Catalysis depends on Asp146, which acts as the Proton donor/acceptor. ATP-binding positions include 206 to 210 (HIGNG), 283 to 285 (DMR), and 331 to 335 (GVGEN). Glu383 provides a ligand contact to Mg(2+).

Belongs to the acetokinase family. Homodimer. The cofactor is Mg(2+). It depends on Mn(2+) as a cofactor.

It localises to the cytoplasm. The enzyme catalyses acetate + ATP = acetyl phosphate + ADP. The protein operates within metabolic intermediate biosynthesis; acetyl-CoA biosynthesis; acetyl-CoA from acetate: step 1/2. Catalyzes the formation of acetyl phosphate from acetate and ATP. Can also catalyze the reverse reaction. This chain is Acetate kinase, found in Streptococcus pneumoniae (strain 70585).